We begin with the raw amino-acid sequence, 209 residues long: Guanylate kinase (209 aa).

Residues 5–182 (GLLIVISGPS…AVTKINSIIV (178 aa)) form the Guanylate kinase-like domain. Residue 12–19 (GPSGAGKG) coordinates ATP.

This sequence belongs to the guanylate kinase family.

The protein resides in the cytoplasm. It catalyses the reaction GMP + ATP = GDP + ADP. Its function is as follows. Essential for recycling GMP and indirectly, cGMP. The chain is Guanylate kinase from Clostridium acetobutylicum (strain ATCC 824 / DSM 792 / JCM 1419 / IAM 19013 / LMG 5710 / NBRC 13948 / NRRL B-527 / VKM B-1787 / 2291 / W).